A 564-amino-acid polypeptide reads, in one-letter code: MKKAKAHHDMAQDEELVFLPLGGVGEIGMNLGLYGYGRPGHRQWIMVDCGVTFPGPELPGVDLVLPDIAFLAEQRRNLKAIIITHAHEDHYGALNDLWPGLNVPVYASPFTAGMLEAKRAFEKSRSEIPITIFKQGDRINVGPFSVEAVGVNHSIPEPMALVIRTQLGTVVHTGDWKIDLEPSLGPLTDESRFRQIGEEGVLALVCDSTNALREGVSPSERQVSESLAKIIADAEGRVGITTFSSNVGRIRSVAEAAEAAGREVLLLGSSMKRVVDVARDVGLMEGVKPFLAEDEFGYIPRDKVVVILTGSQGEPRAALAKIARDEMRNVAFSAGDTIVFSSRTIPGNEKAINDIKNGLIEQGIHIITDSEALVHVSGHPRRTELQQMYQWVKPQILVPVHGEAAHLTAHAELGLQSGIPSVPRLRNGEMLRLAPGPAEVIDEAPHGRIYKDGTLIGDFEEMGIGERRKLSFAGHVSVSVVLDSRYDFLGDPDVVPIGLPEFDDEGEAMEDTLYDAVLGAVESIPRAKRKDLAMLQEAVRRAVRSTTNQVWGKKPVVTVFITKV.

Zn(2+)-binding residues include histidine 85, histidine 87, aspartate 89, histidine 90, histidine 153, and aspartate 175. Substrate is bound at residue 375–379 (HVSGH). Histidine 401 serves as a coordination point for Zn(2+).

This sequence belongs to the metallo-beta-lactamase superfamily. RNA-metabolizing metallo-beta-lactamase-like family. Bacterial RNase J subfamily. Homodimer, may be a subunit of the RNA degradosome. It depends on Zn(2+) as a cofactor.

The protein resides in the cytoplasm. An RNase that has 5'-3' exonuclease and possibly endonuclease activity. Plays a role in 16S and 23S rRNA processing. Might have a role in mRNA maturation and/or decay. The chain is Ribonuclease J from Sinorhizobium meliloti (strain Sm2011 / Rm2011 / 2011).